We begin with the raw amino-acid sequence, 363 residues long: Cytoplasmic envelopment protein 2 (363 aa).

Belongs to the herpesviridae cytoplasmic envelopment protein 2 family. In terms of assembly, interacts with cytoplasmic envelopment protein 3 and with the capsid.

Its subcellular location is the virion tegument. It localises to the host cytoplasm. The protein resides in the host nucleus. In terms of biological role, plays a critical role in cytoplasmic virus egress. Participates in the final step of tegumentation and envelope acquisition within the host cytoplasm by directly interacting with the capsid. Upon virion binding to target cell, a signaling cascade is triggered to disrupt the interaction with the capsid, thereby preparing capsid uncoating. This is Cytoplasmic envelopment protein 2 (44) from Varicella-zoster virus (strain Dumas) (HHV-3).